The following is an 804-amino-acid chain: RasGAP-activating-like protein 1 (804 aa).

2 C2 domains span residues 1–105 and 116–231; these read MAKS…DSWI and VQGE…KGWF. 10 residues coordinate Ca(2+): Asp-21, Asp-27, Asp-74, Asp-76, Asp-82, Asp-149, Asp-155, Asp-202, Asp-204, and Asp-210. In terms of domain architecture, Ras-GAP spans 317–545; that stretch reads GLAGRFLDYL…SRVRDFLDRL (229 aa). One can recognise a PH domain in the interval 565 to 672; sequence AIVREGYLLK…WLSALRKASA (108 aa). The Btk-type zinc finger occupies 674 to 710; the sequence is NPNKLAACHPGAFRSARWTCCLQAERSAAGCSRTHSA. Zn(2+)-binding residues include His-682, Cys-693, Cys-694, and Cys-704.

Ca(2+) is required as a cofactor. As to expression, highly expressed in thyroid and adrenal medulla, lower expression in brain, spinal cord and trachea. Expressed in melanocytes.

In terms of biological role, probable inhibitory regulator of the Ras-cyclic AMP pathway. Plays a role in dendrite formation by melanocytes. This Homo sapiens (Human) protein is RasGAP-activating-like protein 1.